The sequence spans 340 residues: Uroporphyrinogen decarboxylase (340 aa).

Substrate is bound by residues 21–25 (RQAGR), D71, Y148, S203, and H316.

It belongs to the uroporphyrinogen decarboxylase family. In terms of assembly, homodimer.

The protein localises to the cytoplasm. The catalysed reaction is uroporphyrinogen III + 4 H(+) = coproporphyrinogen III + 4 CO2. Its pathway is porphyrin-containing compound metabolism; protoporphyrin-IX biosynthesis; coproporphyrinogen-III from 5-aminolevulinate: step 4/4. Functionally, catalyzes the decarboxylation of four acetate groups of uroporphyrinogen-III to yield coproporphyrinogen-III. This Campylobacter jejuni subsp. jejuni serotype O:6 (strain 81116 / NCTC 11828) protein is Uroporphyrinogen decarboxylase.